Consider the following 197-residue polypeptide: FMN-dependent NADH:quinone oxidoreductase (197 aa).

FMN-binding positions include S10 and 16 to 18 (SIS).

The protein belongs to the azoreductase type 1 family. In terms of assembly, homodimer. It depends on FMN as a cofactor.

It catalyses the reaction 2 a quinone + NADH + H(+) = 2 a 1,4-benzosemiquinone + NAD(+). The catalysed reaction is N,N-dimethyl-1,4-phenylenediamine + anthranilate + 2 NAD(+) = 2-(4-dimethylaminophenyl)diazenylbenzoate + 2 NADH + 2 H(+). Quinone reductase that provides resistance to thiol-specific stress caused by electrophilic quinones. In terms of biological role, also exhibits azoreductase activity. Catalyzes the reductive cleavage of the azo bond in aromatic azo compounds to the corresponding amines. This is FMN-dependent NADH:quinone oxidoreductase from Erythrobacter litoralis (strain HTCC2594).